Consider the following 224-residue polypeptide: Putative MgpC-like protein MPN_150 (224 aa).

The protein belongs to the MgpC family.

The sequence is that of Putative MgpC-like protein MPN_150 from Mycoplasma pneumoniae (strain ATCC 29342 / M129 / Subtype 1) (Mycoplasmoides pneumoniae).